We begin with the raw amino-acid sequence, 447 residues long: N-succinylarginine dihydrolase (447 aa).

Substrate-binding positions include 19 to 28, Asn110, and 137 to 138; these read AGLSFGNEAS and HR. Glu174 is a catalytic residue. Arg212 is a substrate binding site. His248 is an active-site residue. The substrate site is built by Asp250 and Asn359. The active-site Nucleophile is the Cys365.

It belongs to the succinylarginine dihydrolase family. As to quaternary structure, homodimer.

The enzyme catalyses N(2)-succinyl-L-arginine + 2 H2O + 2 H(+) = N(2)-succinyl-L-ornithine + 2 NH4(+) + CO2. It functions in the pathway amino-acid degradation; L-arginine degradation via AST pathway; L-glutamate and succinate from L-arginine: step 2/5. Functionally, catalyzes the hydrolysis of N(2)-succinylarginine into N(2)-succinylornithine, ammonia and CO(2). This chain is N-succinylarginine dihydrolase, found in Escherichia coli O81 (strain ED1a).